The sequence spans 692 residues: Polyribonucleotide nucleotidyltransferase (692 aa).

Mg(2+)-binding residues include Asp484 and Asp490. Positions 551–610 (PRIITIQINPDRIRDVIGPGGKVIRALTEETGATIDIQDNGTVTIASVDGEAGAAAKRRI) constitute a KH domain. One can recognise an S1 motif domain in the interval 620–688 (DTIYDGKVAK…RQGKIKLSMK (69 aa)).

This sequence belongs to the polyribonucleotide nucleotidyltransferase family. As to quaternary structure, component of the RNA degradosome, which is a multiprotein complex involved in RNA processing and mRNA degradation. It depends on Mg(2+) as a cofactor.

The protein localises to the cytoplasm. It catalyses the reaction RNA(n+1) + phosphate = RNA(n) + a ribonucleoside 5'-diphosphate. Involved in mRNA degradation. Catalyzes the phosphorolysis of single-stranded polyribonucleotides processively in the 3'- to 5'-direction. The chain is Polyribonucleotide nucleotidyltransferase from Acidithiobacillus ferrooxidans (strain ATCC 53993 / BNL-5-31) (Leptospirillum ferrooxidans (ATCC 53993)).